Here is a 226-residue protein sequence, read N- to C-terminus: Enolase-phosphatase E1 (226 aa).

The protein belongs to the HAD-like hydrolase superfamily. MasA/MtnC family. In terms of assembly, monomer. Mg(2+) serves as cofactor.

The catalysed reaction is 5-methylsulfanyl-2,3-dioxopentyl phosphate + H2O = 1,2-dihydroxy-5-(methylsulfanyl)pent-1-en-3-one + phosphate. It functions in the pathway amino-acid biosynthesis; L-methionine biosynthesis via salvage pathway; L-methionine from S-methyl-5-thio-alpha-D-ribose 1-phosphate: step 3/6. It participates in amino-acid biosynthesis; L-methionine biosynthesis via salvage pathway; L-methionine from S-methyl-5-thio-alpha-D-ribose 1-phosphate: step 4/6. Bifunctional enzyme that catalyzes the enolization of 2,3-diketo-5-methylthiopentyl-1-phosphate (DK-MTP-1-P) into the intermediate 2-hydroxy-3-keto-5-methylthiopentenyl-1-phosphate (HK-MTPenyl-1-P), which is then dephosphorylated to form the acireductone 1,2-dihydroxy-3-keto-5-methylthiopentene (DHK-MTPene). The protein is Enolase-phosphatase E1 of Shewanella sp. (strain ANA-3).